Consider the following 269-residue polypeptide: 4-hydroxy-tetrahydrodipicolinate reductase (269 aa).

Residues 8-13, glutamate 34, 98-100, and 122-125 contribute to the NAD(+) site; these read GAAGRM, GTT, and APNY. Histidine 155 serves as the catalytic Proton donor/acceptor. Residue histidine 156 participates in (S)-2,3,4,5-tetrahydrodipicolinate binding. Lysine 159 (proton donor) is an active-site residue. A (S)-2,3,4,5-tetrahydrodipicolinate-binding site is contributed by 165-166; it reads GT.

The protein belongs to the DapB family.

Its subcellular location is the cytoplasm. It catalyses the reaction (S)-2,3,4,5-tetrahydrodipicolinate + NAD(+) + H2O = (2S,4S)-4-hydroxy-2,3,4,5-tetrahydrodipicolinate + NADH + H(+). It carries out the reaction (S)-2,3,4,5-tetrahydrodipicolinate + NADP(+) + H2O = (2S,4S)-4-hydroxy-2,3,4,5-tetrahydrodipicolinate + NADPH + H(+). Its pathway is amino-acid biosynthesis; L-lysine biosynthesis via DAP pathway; (S)-tetrahydrodipicolinate from L-aspartate: step 4/4. Its function is as follows. Catalyzes the conversion of 4-hydroxy-tetrahydrodipicolinate (HTPA) to tetrahydrodipicolinate. This chain is 4-hydroxy-tetrahydrodipicolinate reductase, found in Aliivibrio salmonicida (strain LFI1238) (Vibrio salmonicida (strain LFI1238)).